Reading from the N-terminus, the 210-residue chain is Urease accessory protein UreF (210 aa).

The protein belongs to the UreF family. UreD, UreF and UreG form a complex that acts as a GTP-hydrolysis-dependent molecular chaperone, activating the urease apoprotein by helping to assemble the nickel containing metallocenter of UreC. The UreE protein probably delivers the nickel.

The protein localises to the cytoplasm. Required for maturation of urease via the functional incorporation of the urease nickel metallocenter. This Cereibacter sphaeroides (strain ATCC 17023 / DSM 158 / JCM 6121 / CCUG 31486 / LMG 2827 / NBRC 12203 / NCIMB 8253 / ATH 2.4.1.) (Rhodobacter sphaeroides) protein is Urease accessory protein UreF.